Here is a 102-residue protein sequence, read N- to C-terminus: Large ribosomal subunit protein bL21 (102 aa).

Belongs to the bacterial ribosomal protein bL21 family. As to quaternary structure, part of the 50S ribosomal subunit. Contacts protein L20.

Its function is as follows. This protein binds to 23S rRNA in the presence of protein L20. The chain is Large ribosomal subunit protein bL21 from Ehrlichia canis (strain Jake).